Reading from the N-terminus, the 446-residue chain is tRNA-2-methylthio-N(6)-dimethylallyladenosine synthase (446 aa).

In terms of domain architecture, MTTase N-terminal spans 2–119 (KKIYIKTFGC…LPELIAQRRE (118 aa)). 6 residues coordinate [4Fe-4S] cluster: C11, C48, C82, C156, C160, and C163. Residues 142 to 376 (RVEGGAAFVS…RIEAQAQGVN (235 aa)) form the Radical SAM core domain. In terms of domain architecture, TRAM spans 377–440 (RSMVGSVQRV…PHSLRGEAVT (64 aa)).

Belongs to the methylthiotransferase family. MiaB subfamily. As to quaternary structure, monomer. The cofactor is [4Fe-4S] cluster.

The protein localises to the cytoplasm. It carries out the reaction N(6)-dimethylallyladenosine(37) in tRNA + (sulfur carrier)-SH + AH2 + 2 S-adenosyl-L-methionine = 2-methylsulfanyl-N(6)-dimethylallyladenosine(37) in tRNA + (sulfur carrier)-H + 5'-deoxyadenosine + L-methionine + A + S-adenosyl-L-homocysteine + 2 H(+). Catalyzes the methylthiolation of N6-(dimethylallyl)adenosine (i(6)A), leading to the formation of 2-methylthio-N6-(dimethylallyl)adenosine (ms(2)i(6)A) at position 37 in tRNAs that read codons beginning with uridine. The sequence is that of tRNA-2-methylthio-N(6)-dimethylallyladenosine synthase from Thiobacillus denitrificans (strain ATCC 25259 / T1).